We begin with the raw amino-acid sequence, 72 residues long: Translation initiation factor IF-1 (72 aa).

In terms of domain architecture, S1-like spans Met-1–Lys-72.

The protein belongs to the IF-1 family. In terms of assembly, component of the 30S ribosomal translation pre-initiation complex which assembles on the 30S ribosome in the order IF-2 and IF-3, IF-1 and N-formylmethionyl-tRNA(fMet); mRNA recruitment can occur at any time during PIC assembly.

The protein resides in the cytoplasm. Its function is as follows. One of the essential components for the initiation of protein synthesis. Stabilizes the binding of IF-2 and IF-3 on the 30S subunit to which N-formylmethionyl-tRNA(fMet) subsequently binds. Helps modulate mRNA selection, yielding the 30S pre-initiation complex (PIC). Upon addition of the 50S ribosomal subunit IF-1, IF-2 and IF-3 are released leaving the mature 70S translation initiation complex. The chain is Translation initiation factor IF-1 from Pediococcus pentosaceus (strain ATCC 25745 / CCUG 21536 / LMG 10740 / 183-1w).